The primary structure comprises 241 residues: Ribonuclease HII (241 aa).

Residues 27–227 form the RNase H type-2 domain; the sequence is GPVAGVDEAG…REARSLRLED (201 aa). Residues Asp-33, Glu-34, and Asp-128 each contribute to the a divalent metal cation site.

The protein belongs to the RNase HII family. Mn(2+) is required as a cofactor. Mg(2+) serves as cofactor.

The protein localises to the cytoplasm. It carries out the reaction Endonucleolytic cleavage to 5'-phosphomonoester.. In terms of biological role, endonuclease that specifically degrades the RNA of RNA-DNA hybrids. The chain is Ribonuclease HII from Frankia alni (strain DSM 45986 / CECT 9034 / ACN14a).